Reading from the N-terminus, the 353-residue chain is Photosystem II D2 protein (353 aa).

Residue Thr2 is modified to N-acetylthreonine. Thr2 carries the post-translational modification Phosphothreonine. The helical transmembrane segment at 41–61 (CAYFALGGWLTGTTFVTSWYT) threads the bilayer. Residue His118 coordinates chlorophyll a. A helical membrane pass occupies residues 125–141 (GFMLRQFEIARSVGLRP). The pheophytin a site is built by Gln130 and Asn143. The chain crosses the membrane as a helical span at residues 153–166 (VFVSVFLIYPLGQS). His198 serves as a coordination point for chlorophyll a. A helical membrane pass occupies residues 208–228 (AALLCAIHGATVENTIFEDGD). A plastoquinone contacts are provided by His215 and Phe262. Position 215 (His215) interacts with Fe cation. His269 serves as a coordination point for Fe cation. The chain crosses the membrane as a helical span at residues 279–295 (GLWMSAIGVVGLALNLR).

This sequence belongs to the reaction center PufL/M/PsbA/D family. In terms of assembly, PSII is composed of 1 copy each of membrane proteins PsbA, PsbB, PsbC, PsbD, PsbE, PsbF, PsbH, PsbI, PsbJ, PsbK, PsbL, PsbM, PsbT, PsbX, PsbY, PsbZ, Psb30/Ycf12, at least 3 peripheral proteins of the oxygen-evolving complex and a large number of cofactors. It forms dimeric complexes. It depends on The D1/D2 heterodimer binds P680, chlorophylls that are the primary electron donor of PSII, and subsequent electron acceptors. It shares a non-heme iron and each subunit binds pheophytin, quinone, additional chlorophylls, carotenoids and lipids. There is also a Cl(-1) ion associated with D1 and D2, which is required for oxygen evolution. The PSII complex binds additional chlorophylls, carotenoids and specific lipids. as a cofactor.

The protein resides in the plastid. It is found in the chloroplast thylakoid membrane. It catalyses the reaction 2 a plastoquinone + 4 hnu + 2 H2O = 2 a plastoquinol + O2. Photosystem II (PSII) is a light-driven water:plastoquinone oxidoreductase that uses light energy to abstract electrons from H(2)O, generating O(2) and a proton gradient subsequently used for ATP formation. It consists of a core antenna complex that captures photons, and an electron transfer chain that converts photonic excitation into a charge separation. The D1/D2 (PsbA/PsbD) reaction center heterodimer binds P680, the primary electron donor of PSII as well as several subsequent electron acceptors. D2 is needed for assembly of a stable PSII complex. This Staurastrum punctulatum (Green alga) protein is Photosystem II D2 protein.